Reading from the N-terminus, the 884-residue chain is Probable leucine--tRNA ligase, cytoplasmic (884 aa).

Residues 40–50 (PYMNGKLHLGH) carry the 'HIGH' region motif. Positions 566–570 (KMSKS) match the 'KMSKS' region motif. K569 is a binding site for ATP.

It belongs to the class-I aminoacyl-tRNA synthetase family.

The protein resides in the cytoplasm. It catalyses the reaction tRNA(Leu) + L-leucine + ATP = L-leucyl-tRNA(Leu) + AMP + diphosphate. This chain is Probable leucine--tRNA ligase, cytoplasmic, found in Vairimorpha ceranae (strain BRL01) (Microsporidian parasite).